A 536-amino-acid polypeptide reads, in one-letter code: REST corepressor 2 (536 aa).

Residues 1–44 are disordered; sequence MERSGSGVLSRSRAKTVTNGNSQHSEEESSDEEHPNDSMIRVGG. A compositionally biased stretch (basic and acidic residues) spans 24-36; that stretch reads HSEEESSDEEHPN. In terms of domain architecture, ELM2 spans 38 to 123; it reads SMIRVGGDYQ…KSLADLANFT (86 aa). The SANT 1 domain occupies 124 to 175; that stretch reads PFPDEWTVEDKVLFEQAFSFHGKSFHRIQQMLPDKMITSLVKYYYSWKKTRT. Residues 179-264 are disordered; that stretch reads VMDRQARKLL…RARRRPPKGM (86 aa). Residues 197 to 211 are compositionally biased toward acidic residues; the sequence is NDEIEEGDPGSDSDF. Residues 249–262 are compositionally biased toward basic residues; it reads YRHHPLRARRRPPK. Positions 283-315 form a coiled coil; that stretch reads VTIRQLDTQLVSLKRQVQKIKQTNSVLRNNLGD. An SANT 2 domain is found at 328 to 379; that stretch reads KINSRWTTEEQLLAVQAVRRYGKDFAAIADVIGNKTVAQVSSFFVSYRRRFN. The tract at residues 389–536 is disordered; that stretch reads AEQEVQGSSG…GLKVESPQSH (148 aa). Residues 391–406 show a composition bias toward polar residues; sequence QEVQGSSGRTVNTELN. A compositionally biased stretch (low complexity) spans 422–449; the sequence is SPPHSDSPLPSSEGSASGNHSSAQSSPP. The span at 450–476 shows a compositional bias: pro residues; the sequence is LTQPPPLLRPAPPSAPPSLLRQPPPLQ.

It belongs to the CoREST family.

The protein localises to the nucleus. Functionally, may act as a component of a corepressor complex that represses transcription. The sequence is that of REST corepressor 2 (rcor2) from Danio rerio (Zebrafish).